Consider the following 1716-residue polypeptide: Histone-lysine N-methyltransferase SETD1A (1716 aa).

An interaction with WDR82 region spans residues 60-89; the sequence is LQDPRCHVRSKARDFSLPVPKFKLDEFYIG. Positions 84–172 constitute an RRM domain; that stretch reads DEFYIGQIPL…NIIHAQLDIK (89 aa). Disordered regions lie at residues 194–367, 380–499, 516–670, 849–869, 911–1206, 1230–1259, and 1275–1297; these read PTGG…SSYP, TSYP…AQHS, FSFL…PPPH, AKPF…EKMK, KRKE…SRKV, EEVA…GTEV, and GLAT…AERP. Low complexity predominate over residues 222-231; sequence SDTAAYPAGT. Residues 243–277 are compositionally biased toward polar residues; sequence CSQDTNFSSSRQDTPSSFGQFTPQSSQGTPYTSRG. 2 stretches are compositionally biased toward low complexity: residues 278 to 295 and 315 to 357; these read STPY…TSTS and STSS…SSAS. The segment covering 430–440 has biased composition (pro residues); sequence SEAPPPEPPEP. A compositionally biased stretch (gly residues) spans 441–461; it reads GGGGGGSGGGGGGGGGGGGGA. Position 477 is a phosphoserine (Ser477). Residues 477–487 are compositionally biased toward low complexity; the sequence is SPARSGSPAPE. Residues 488–499 show a composition bias toward polar residues; sequence TTNESVPFAQHS. A phosphoserine mark is found at Ser521 and Ser578. Polar residues predominate over residues 581 to 591; that stretch reads ANGQNQASPCS. 2 stretches are compositionally biased toward pro residues: residues 606 to 631 and 638 to 670; these read SPPP…PPPY and GYPP…PPPH. Residues 859-869 are compositionally biased toward basic and acidic residues; sequence QAKEEDKEKMK. Ser930 is modified (phosphoserine). 2 stretches are compositionally biased toward acidic residues: residues 991–1009 and 1018–1027; these read KDED…EEAV and ASDGEDEDSD. A compositionally biased stretch (low complexity) spans 1028–1071; sequence SSSQCSLYADSDGENGSTSDSESGSSSSSSSSSSSSSSSSSSES. A Phosphoserine modification is found at Ser1110. The segment covering 1130–1150 has biased composition (pro residues); it reads EEPPPSVPQPPAEPPAGPPDA. Over residues 1283–1292 the composition is skewed to acidic residues; the sequence is DDSEATETSD. The HCFC1-binding motif (HBM) motif lies at 1307 to 1311; it reads EHNYA. 2 disordered regions span residues 1355–1427 and 1480–1508; these read EEPK…FEPR and TNLS…SEGY. Residues 1369-1383 show a composition bias toward acidic residues; it reads EGEEEEEDEEEESES. The segment covering 1399-1412 has biased composition (basic residues); it reads RRRSLRSHTRRRRP. Pro residues predominate over residues 1413 to 1424; sequence PLPPPPPPPPSF. The interaction with CFP1 stretch occupies residues 1424-1459; sequence FEPRSEFEQMTILYDIWNSGLDLEDMSYLRLTYERL. The tract at residues 1459–1546 is interaction with ASH2L, RBBP5 and WDR5; it reads LLQQTSGADW…GTNRVLSERR (88 aa). A WDR5 interaction motif (WIN) motif is present at residues 1501–1506; it reads GSARSE. The RxxxRR motif motif lies at 1546–1551; it reads RSEQRR. The 118-residue stretch at 1577-1694 folds into the SET domain; it reads KKLRFGRSRI…VDEEITYDYK (118 aa). Position 1693 (Tyr1693) interacts with S-adenosyl-L-methionine. The region spanning 1700–1716 is the Post-SET domain; it reads NKIPCLCGTESCRGSLN.

Belongs to the class V-like SAM-binding methyltransferase superfamily. Component of the SET1A/COMPASS complex composed of the catalytic subunit SETD1A, WDR5, WDR82, RBBP5, ASH2L/ASH2, CXXC1/CFP1, HCFC1 and DPY30 homotrimer. Forms a core complex with the evolutionary conserved subcomplex WRAD composed of WDR5, RBBP5, ASH2L/ASH2 and DPY30 subunits; WRAD differentially stimulates the methyltransferase activity. Interacts with BOD1L1 (via COMPASS-Shg1 domain) at replication forks. Interacts with HCFC1. Interacts with ASH2/ASH2L. Interacts with CXXC1/CFP1. Interacts with RBBP5. Interacts (via N-terminal region) with WDR82; the interaction is direct. Interacts (via the RRM domain) with hyperphosphorylated C-terminal domain (CTD) of RNA polymerase II large subunit (POLR2A) only in the presence of WDR82. Binds specifically to CTD heptad repeats phosphorylated on 'Ser-5' of each heptad. Interacts with ZNF335. Interacts with SUPT6H. Interacts with NAP1L1. Interacts (via WIN motif) with WDR5.

It localises to the nucleus. It is found in the nucleus speckle. Its subcellular location is the chromosome. The protein resides in the cytoplasm. It carries out the reaction L-lysyl(4)-[histone H3] + S-adenosyl-L-methionine = N(6)-methyl-L-lysyl(4)-[histone H3] + S-adenosyl-L-homocysteine + H(+). The enzyme catalyses N(6)-methyl-L-lysyl(4)-[histone H3] + S-adenosyl-L-methionine = N(6),N(6)-dimethyl-L-lysyl(4)-[histone H3] + S-adenosyl-L-homocysteine + H(+). It catalyses the reaction N(6),N(6)-dimethyl-L-lysyl(4)-[histone H3] + S-adenosyl-L-methionine = N(6),N(6),N(6)-trimethyl-L-lysyl(4)-[histone H3] + S-adenosyl-L-homocysteine + H(+). In terms of biological role, histone methyltransferase that catalyzes methyl group transfer from S-adenosyl-L-methionine to the epsilon-amino group of 'Lys-4' of histone H3 (H3K4) via a non-processive mechanism. Part of chromatin remodeling machinery, forms H3K4me1, H3K4me2 and H3K4me3 methylation marks at active chromatin sites where transcription and DNA repair take place. Responsible for H3K4me3 enriched promoters and transcriptional programming of inner mass stem cells and neuron progenitors during embryogenesis. Required for H3K4me1 mark at stalled replication forks. Mediates FANCD2-dependent nucleosome remodeling and RAD51 nucleofilaments stabilization at reversed forks, protecting them from nucleolytic degradation. Does not methylate 'Lys-4' of histone H3 if the neighboring 'Lys-9' residue is already methylated. Has RNA binding activity towards transcripts involved in RNA processing and the DNA damage response. The polypeptide is Histone-lysine N-methyltransferase SETD1A (Setd1a) (Mus musculus (Mouse)).